A 505-amino-acid polypeptide reads, in one-letter code: MAQKDNQKEMNDQLKVRREKMQFLKDEGIDPFGSRFERTHLAAALHEEFEAIEKDDLDVKNQEVTIAGRMMSKRGKGKVGFADIRDRSGKIQIYVRKDEVGEDNYKIFKKADLGDHLGITGQIMKTDMGELTVKATHLTFLSKALRPLPDKYHGLTNVEQIYRQRYLDLIANPESMDRFTKRSKIISAVREYLDTHDFTEVETPVLHGQAGGASARPFITHHNALDINLYLRIALELHLKRLIVGGMERVYEIGRVFRNEGIDTKHNPEFTMLETYAAYFDYKDVMDETEGIIRFAAHKVLGTGQISYQGQAIDLDSDFARVHMVDAIKAETGVDFWQPMTVESARELADQHHVKYEEYWQVGHIINAFFEEFVEDTLVQPTFIYGHPVEISPLAKKNAEDDRFTDRWELFMHGNEYANAFTELNDPIDQRERFEAQAKERENGNDEAEGIDEDYVEALEYGMPPTGGLGIGIDRLVMLLTDAASIRDVLLFPTMRPDKQENEEI.

Positions 409 and 416 each coordinate Mg(2+).

Belongs to the class-II aminoacyl-tRNA synthetase family. Homodimer. It depends on Mg(2+) as a cofactor.

Its subcellular location is the cytoplasm. The catalysed reaction is tRNA(Lys) + L-lysine + ATP = L-lysyl-tRNA(Lys) + AMP + diphosphate. This Latilactobacillus sakei subsp. sakei (strain 23K) (Lactobacillus sakei subsp. sakei) protein is Lysine--tRNA ligase.